The chain runs to 745 residues: Fatty acid oxidation complex subunit alpha (745 aa).

The enoyl-CoA hydratase stretch occupies residues 47–209 (VNTLKAKFAE…KMGLVDDVVP (163 aa)). The tract at residues 325-745 (RAIHRVGVLG…LDEAAITAHN (421 aa)) is 3-hydroxyacyl-CoA dehydrogenase.

The protein in the N-terminal section; belongs to the enoyl-CoA hydratase/isomerase family. In the central section; belongs to the 3-hydroxyacyl-CoA dehydrogenase family. In terms of assembly, heterotetramer of two alpha chains (FadJ) and two beta chains (FadI).

The protein resides in the cytoplasm. The catalysed reaction is a (3S)-3-hydroxyacyl-CoA = a (2E)-enoyl-CoA + H2O. The enzyme catalyses a 4-saturated-(3S)-3-hydroxyacyl-CoA = a (3E)-enoyl-CoA + H2O. It catalyses the reaction a (3S)-3-hydroxyacyl-CoA + NAD(+) = a 3-oxoacyl-CoA + NADH + H(+). It carries out the reaction (3S)-3-hydroxybutanoyl-CoA = (3R)-3-hydroxybutanoyl-CoA. The protein operates within lipid metabolism; fatty acid beta-oxidation. In terms of biological role, catalyzes the formation of a hydroxyacyl-CoA by addition of water on enoyl-CoA. Also exhibits 3-hydroxyacyl-CoA epimerase and 3-hydroxyacyl-CoA dehydrogenase activities. The polypeptide is Fatty acid oxidation complex subunit alpha (Yersinia enterocolitica serotype O:8 / biotype 1B (strain NCTC 13174 / 8081)).